Reading from the N-terminus, the 934-residue chain is Protocadherin gamma-C3 (934 aa).

A signal peptide spans 1 to 31 (MVPEAWRSGLVSTGRVVGVLLLLGALNKAST). Cadherin domains follow at residues 32 to 135 (VIHY…NPAF), 136 to 244 (PTQE…APVF), 245 to 352 (NQSL…APEI), 353 to 457 (TVTS…PPQS), 458 to 567 (SQSS…APQV), and 572 to 685 (PGGS…APRE). Residues 32-693 (VIHYEIPEER…REQNKNLTFY (662 aa)) lie on the Extracellular side of the membrane. Asparagine 245, asparagine 424, asparagine 478, asparagine 550, asparagine 615, and asparagine 689 each carry an N-linked (GlcNAc...) asparagine glycan. The chain crosses the membrane as a helical span at residues 694–714 (LLLSLILVSVGFVVTVFGVII). At 715 to 934 (FKVYKWKQSR…KKKSGKKEKK (220 aa)) the chain is on the cytoplasmic side. Disordered stretches follow at residues 804–843 (ESAP…WPNN) and 904–934 (ATLT…KEKK). Over residues 812-843 (APPNTDWRFSQAQRPGTSGSQNGDDTGTWPNN) the composition is skewed to polar residues. Positions 924-934 (NKKKSGKKEKK) are enriched in basic residues.

Its subcellular location is the cell membrane. Its function is as follows. Potential calcium-dependent cell-adhesion protein. May be involved in the establishment and maintenance of specific neuronal connections in the brain. This Pan troglodytes (Chimpanzee) protein is Protocadherin gamma-C3 (PCDHGC3).